Reading from the N-terminus, the 362-residue chain is 3-dehydroquinate synthase (362 aa).

Residues 72–77 (DGEQYK), 106–110 (GVVGD), 130–131 (TT), Lys143, Lys152, and 170–173 (CLKT) each bind NAD(+). The Zn(2+) site is built by Glu185, His248, and His265.

It belongs to the sugar phosphate cyclases superfamily. Dehydroquinate synthase family. The cofactor is Co(2+). Zn(2+) serves as cofactor. NAD(+) is required as a cofactor.

The protein localises to the cytoplasm. The enzyme catalyses 7-phospho-2-dehydro-3-deoxy-D-arabino-heptonate = 3-dehydroquinate + phosphate. It participates in metabolic intermediate biosynthesis; chorismate biosynthesis; chorismate from D-erythrose 4-phosphate and phosphoenolpyruvate: step 2/7. Functionally, catalyzes the conversion of 3-deoxy-D-arabino-heptulosonate 7-phosphate (DAHP) to dehydroquinate (DHQ). The chain is 3-dehydroquinate synthase from Aliivibrio fischeri (strain ATCC 700601 / ES114) (Vibrio fischeri).